A 149-amino-acid polypeptide reads, in one-letter code: 16.9 kDa class I heat shock protein 3 (149 aa).

The region spanning 35 to 149 (DTAAFANARV…PEVKAIEISG (115 aa)) is the sHSP domain.

The protein belongs to the small heat shock protein (HSP20) family. May form oligomeric structures.

The protein resides in the cytoplasm. The chain is 16.9 kDa class I heat shock protein 3 (HSP16.9C) from Oryza sativa subsp. japonica (Rice).